The chain runs to 263 residues: Hydroxyethylthiazole kinase (263 aa).

M45 lines the substrate pocket. ATP contacts are provided by R121 and S167. Substrate is bound at residue G194.

It belongs to the Thz kinase family. It depends on Mg(2+) as a cofactor.

The enzyme catalyses 5-(2-hydroxyethyl)-4-methylthiazole + ATP = 4-methyl-5-(2-phosphooxyethyl)-thiazole + ADP + H(+). It functions in the pathway cofactor biosynthesis; thiamine diphosphate biosynthesis; 4-methyl-5-(2-phosphoethyl)-thiazole from 5-(2-hydroxyethyl)-4-methylthiazole: step 1/1. Catalyzes the phosphorylation of the hydroxyl group of 4-methyl-5-beta-hydroxyethylthiazole (THZ). In Vibrio parahaemolyticus serotype O3:K6 (strain RIMD 2210633), this protein is Hydroxyethylthiazole kinase.